We begin with the raw amino-acid sequence, 425 residues long: Glutamyl-tRNA reductase (425 aa).

Substrate-binding positions include 49 to 52 (TCNR), S107, 112 to 114 (EPQ), and Q118. C50 serves as the catalytic Nucleophile. 187-192 (GAGETI) serves as a coordination point for NADP(+).

It belongs to the glutamyl-tRNA reductase family. In terms of assembly, homodimer.

It carries out the reaction (S)-4-amino-5-oxopentanoate + tRNA(Glu) + NADP(+) = L-glutamyl-tRNA(Glu) + NADPH + H(+). Its pathway is porphyrin-containing compound metabolism; protoporphyrin-IX biosynthesis; 5-aminolevulinate from L-glutamyl-tRNA(Glu): step 1/2. Its function is as follows. Catalyzes the NADPH-dependent reduction of glutamyl-tRNA(Glu) to glutamate 1-semialdehyde (GSA). The chain is Glutamyl-tRNA reductase from Pseudomonas putida (strain W619).